The chain runs to 130 residues: Blasticidin-S deaminase (130 aa).

Residues 1–129 form the CMP/dCMP-type deaminase domain; sequence MPLSQEESTL…ELLPSGYVWE (129 aa). Serine 28 is a substrate binding site. Residue cysteine 54 participates in Zn(2+) binding. Glutamate 56 serves as the catalytic Proton donor. Residue arginine 82 coordinates substrate. Zn(2+) contacts are provided by cysteine 88 and cysteine 91. Residues tyrosine 126 and tryptophan 128 each coordinate substrate.

The protein belongs to the cytidine and deoxycytidylate deaminase family. Homotetramer. Zn(2+) serves as cofactor.

It catalyses the reaction blasticidin S + H2O + H(+) = deaminohydroxyblasticidin S + NH4(+). Its function is as follows. Catalyzes the deamination of the cytosine moiety of the antibiotics blasticidin S, cytomycin and acetylblasticidin S. The polypeptide is Blasticidin-S deaminase (bsd) (Aspergillus terreus).